We begin with the raw amino-acid sequence, 422 residues long: Serine protease HTRA2, mitochondrial (422 aa).

The transit peptide at 1 to 17 directs the protein to the mitochondrion; the sequence is MALRGSHRLEVIFKRCI. The propeptide occupies 18–74; that stretch reads ASPVLHSQAGNRRSSQLAIKGVDPNSNGNSGQYQQNGEHKEKGWRRLVRFFVPFSLG. The disordered stretch occupies residues 28 to 55; that stretch reads NRRSSQLAIKGVDPNSNGNSGQYQQNGE. Residues 42-53 are compositionally biased toward low complexity; that stretch reads NSNGNSGQYQQN. Residues 64 to 82 traverse the membrane as a helical segment; that stretch reads LVRFFVPFSLGAAVSAAII. 2 consecutive short sequence motifs (IAP-binding) follow at residues 75–78 and 94–97; these read AAVS and SKMT. Residues 139–302 are serine protease; that stretch reads SNGSGFIIEQ…IPIDYVKVFL (164 aa). Residues His157, Asp189, and Ser266 each act as charge relay system in the active site. The PDZ domain occupies 325-410; that stretch reads MGITMLTLTP…TLDIVILRGV (86 aa).

This sequence belongs to the peptidase S1C family. As to quaternary structure, interacts with th/DIAP1 (via BIR 2 domain).

Its subcellular location is the mitochondrion intermembrane space. It localises to the mitochondrion membrane. It carries out the reaction Cleavage of non-polar aliphatic amino-acids at the P1 position, with a preference for Val, Ile and Met. At the P2 and P3 positions, Arg is selected most strongly with a secondary preference for other hydrophilic residues.. Its function is as follows. Serine protease that shows proteolytic activity against a non-specific substrate beta-casein. Promotes or induces cell death either by direct binding to and inhibition of BIRC proteins (also called inhibitor of apoptosis proteins, IAPs), leading to an increase in caspase activity, or by a BIRC inhibition-independent, caspase-independent and serine protease activity-dependent mechanism. Can antagonize antiapoptotic activity of th/Diap1 by directly inducing the degradation of th/Diap1. This is Serine protease HTRA2, mitochondrial from Drosophila sechellia (Fruit fly).